A 190-amino-acid chain; its full sequence is A-type ATP synthase subunit E (190 aa).

It belongs to the V-ATPase E subunit family. In terms of assembly, has multiple subunits with at least A(3), B(3), C, D, E, F, H, I and proteolipid K(x).

It is found in the cell membrane. Its function is as follows. Component of the A-type ATP synthase that produces ATP from ADP in the presence of a proton gradient across the membrane. The sequence is that of A-type ATP synthase subunit E from Pyrobaculum neutrophilum (strain DSM 2338 / JCM 9278 / NBRC 100436 / V24Sta) (Thermoproteus neutrophilus).